The chain runs to 488 residues: Tyrosine-protein kinase Srms (488 aa).

Residues P51–P112 form the SH3 domain. One can recognise an SH2 domain in the interval W120–C212. In terms of domain architecture, Protein kinase spans F230 to P488. Residues L236 to V244 and K258 contribute to the ATP site. D350 functions as the Proton acceptor in the catalytic mechanism. Y380 bears the Phosphotyrosine; by autocatalysis mark.

This sequence belongs to the protein kinase superfamily. Tyr protein kinase family. SRC subfamily. As to quaternary structure, interacts (via the SH2 and SH3 domains) with DOK1. Interacts with KHDRBS1/SAM68 and VIM. Highly expressed in most breast cancers (at protein level).

It is found in the cytoplasm. It carries out the reaction L-tyrosyl-[protein] + ATP = O-phospho-L-tyrosyl-[protein] + ADP + H(+). Functionally, non-receptor tyrosine-protein kinase which phosphorylates DOK1 on tyrosine residues. Also phosphorylates KHDRBS1/SAM68 and VIM on tyrosine residues. Phosphorylation of KHDRBS1 is EGF-dependent. Phosphorylates OTUB1, promoting deubiquitination of RPTOR. The polypeptide is Tyrosine-protein kinase Srms (SRMS) (Homo sapiens (Human)).